A 414-amino-acid polypeptide reads, in one-letter code: Esterase FrsA (414 aa).

The protein belongs to the FrsA family.

It catalyses the reaction a carboxylic ester + H2O = an alcohol + a carboxylate + H(+). In terms of biological role, catalyzes the hydrolysis of esters. This Shigella dysenteriae serotype 1 (strain Sd197) protein is Esterase FrsA.